Consider the following 431-residue polypeptide: Glutamyl-tRNA(Gln) amidotransferase subunit A (431 aa).

Residues Lys-55 and Ser-130 each act as charge relay system in the active site. Ser-154 acts as the Acyl-ester intermediate in catalysis.

It belongs to the amidase family. GatA subfamily. As to quaternary structure, heterotrimer of A, B and C subunits.

The catalysed reaction is L-glutamyl-tRNA(Gln) + L-glutamine + ATP + H2O = L-glutaminyl-tRNA(Gln) + L-glutamate + ADP + phosphate + H(+). In terms of biological role, allows the formation of correctly charged Gln-tRNA(Gln) through the transamidation of misacylated Glu-tRNA(Gln) in organisms which lack glutaminyl-tRNA synthetase. The reaction takes place in the presence of glutamine and ATP through an activated gamma-phospho-Glu-tRNA(Gln). In Methanococcus vannielii (strain ATCC 35089 / DSM 1224 / JCM 13029 / OCM 148 / SB), this protein is Glutamyl-tRNA(Gln) amidotransferase subunit A.